Reading from the N-terminus, the 597-residue chain is Spastin (597 aa).

Residues 1-20 lie on the Cytoplasmic side of the membrane; that stretch reads MPNNDILRPLAIPAKYVGSF. Residues 21-37 constitute an intramembrane region (helical); it reads LVFLYNGLYFVFVVNLW. At 38–597 the chain is on the cytoplasmic side; that stretch reads SRLFGKATKT…DWNRLYGSNA (560 aa). The disordered stretch occupies residues 56-80; that stretch reads RKLGKDMASRAPPRRGQSSEDNEDG. An MIT domain is found at 91–168; sequence HHKQAYAYIA…ENTRERMDEL (78 aa). The interval 193–289 is disordered; that stretch reads SARKTSSEPS…PAMMAKQSCV (97 aa). Polar residues predominate over residues 214-231; sequence SYKQSKSYKNSTTVTTKR. Residues 232–252 are compositionally biased toward low complexity; it reads SQASPSFSSSSSSVNSTAGSS.

It belongs to the AAA ATPase family. Spastin subfamily. As to quaternary structure, homohexamer. The homohexamer is stabilized by ATP-binding. The homohexamer may adopt a ring conformation through which microtubules pass prior to being severed. Interacts with microtubules.

It localises to the membrane. It is found in the cytoplasm. The protein resides in the cytoskeleton. Its subcellular location is the microtubule organizing center. The protein localises to the centrosome. It carries out the reaction n ATP + n H2O + a microtubule = n ADP + n phosphate + (n+1) alpha/beta tubulin heterodimers.. Its function is as follows. ATP-dependent microtubule severing protein. Microtubule severing may promote reorganization of cellular microtubule arrays and the release of microtubules from the microtubule organizing center following nucleation. This is Spastin from Nematostella vectensis (Starlet sea anemone).